The chain runs to 387 residues: MKKIYADLHIHIGRTFTGRAVKITGAKTLTLDRILVEASEHKGIELLGIIDCHSPEVILELEEGISSGKYRELDGGGIRYRSTTLLLGSELEIYDEACSGPIHVLVFMPTLADMKQFSNWLSARLKNIHLSSQRIYETGLNLQKKVQDMGGLFIPAHIFTPHKSLYGKGVKSSLTEVFDPSMIDAVELGLSCDTDMASHVSQLNPYPFLTNSDAHSLGKIGREYNELYVQSADFTEFALALKGQDDRKIIANYGLDPLLGKYYQTACEACGEPAVSGETACANCGKARFTKGVSDRLRELSDQLEVRVPRPRYVHQIPLQFVPGVGPKTLDKLKKAFGTEMAVLHEAAEEDLARVVPPKTAALIVKARSGKLELKAGGGGTYGKIKP.

This sequence to M.jannaschii MJ0043 N-terminal region.

This is an uncharacterized protein from Bacillus subtilis (strain 168).